A 364-amino-acid chain; its full sequence is Aminomethyltransferase (364 aa).

The protein belongs to the GcvT family. As to quaternary structure, the glycine cleavage system is composed of four proteins: P, T, L and H.

It carries out the reaction N(6)-[(R)-S(8)-aminomethyldihydrolipoyl]-L-lysyl-[protein] + (6S)-5,6,7,8-tetrahydrofolate = N(6)-[(R)-dihydrolipoyl]-L-lysyl-[protein] + (6R)-5,10-methylene-5,6,7,8-tetrahydrofolate + NH4(+). Functionally, the glycine cleavage system catalyzes the degradation of glycine. This Shigella flexneri serotype 5b (strain 8401) protein is Aminomethyltransferase.